A 500-amino-acid chain; its full sequence is GTPase Der (500 aa).

EngA-type G domains lie at 3–166 and 211–384; these read PVVA…MEEL and IKLA…VSAT. GTP-binding positions include 9-16, 56-60, 118-121, 217-224, 264-268, and 329-332; these read GRPNVGKS, DTGGI, NKID, DTAGV, and NKWD. One can recognise a KH-like domain in the interval 385–469; sequence KRVGTSVLTR…PIRIQFQNSE (85 aa). Residues 481–500 form a disordered region; the sequence is LSQERQRKRLVGAVKNRNKK. Residues 486 to 500 show a composition bias toward basic residues; the sequence is QRKRLVGAVKNRNKK.

It belongs to the TRAFAC class TrmE-Era-EngA-EngB-Septin-like GTPase superfamily. EngA (Der) GTPase family. In terms of assembly, associates with the 50S ribosomal subunit.

Functionally, GTPase that plays an essential role in the late steps of ribosome biogenesis. In Aliivibrio salmonicida (strain LFI1238) (Vibrio salmonicida (strain LFI1238)), this protein is GTPase Der.